We begin with the raw amino-acid sequence, 434 residues long: Alpha-enolase (434 aa).

The residue at position 2 (Ser-2) is an N-acetylserine. Lys-5 is subject to N6-acetyllysine. Ser-40 is a binding site for Mg(2+). Tyr-44 is modified (phosphotyrosine). Lys-60 is modified (N6-acetyllysine; alternate). An N6-succinyllysine; alternate modification is found at Lys-60. An N6-acetyllysine mark is found at Lys-64 and Lys-71. At Lys-89 the chain carries N6-acetyllysine; alternate. Lys-89 is subject to N6-succinyllysine; alternate. At Lys-126 the chain carries N6-acetyllysine. Substrate-binding residues include His-158 and Glu-167. Lys-193 and Lys-199 each carry N6-acetyllysine. N6-acetyllysine; alternate is present on Lys-202. Residue Lys-202 forms a Glycyl lysine isopeptide (Lys-Gly) (interchain with G-Cter in SUMO2); alternate linkage. Residue Glu-210 is the Proton donor of the active site. Lys-228 and Lys-233 each carry N6-acetyllysine; alternate. Lys-228 carries the post-translational modification N6-succinyllysine; alternate. Lys-228 carries the post-translational modification N6-(2-hydroxyisobutyryl)lysine; alternate. Position 233 is an N6-malonyllysine; alternate (Lys-233). A Mg(2+)-binding site is contributed by Asp-245. Residue Lys-256 is modified to N6-acetyllysine. Phosphoserine is present on Ser-263. At Lys-281 the chain carries N6-acetyllysine; alternate. At Lys-281 the chain carries N6-(2-hydroxyisobutyryl)lysine; alternate. N6-acetyllysine is present on Lys-285. Position 287 is a phosphotyrosine (Tyr-287). Ser-291 carries the phosphoserine modification. 2 residues coordinate Mg(2+): Glu-293 and Asp-318. Glu-293 and Asp-318 together coordinate substrate. An N6-acetyllysine mark is found at Lys-335 and Lys-343. Lys-343 (proton acceptor) is an active-site residue. Substrate-binding positions include 370 to 373 (SHRS) and Lys-394. The required for interaction with PLG stretch occupies residues 405–434 (AKYNQILRIEEELGSKAKFAGRSFRNPLAK). An N6-acetyllysine modification is found at Lys-406. At Lys-420 the chain carries N6-acetyllysine; alternate. Position 420 is an N6-succinyllysine; alternate (Lys-420). Lys-420 carries the N6-malonyllysine; alternate modification.

The protein belongs to the enolase family. In terms of assembly, mammalian enolase is composed of 3 isozyme subunits, alpha, beta and gamma, which can form homodimers or heterodimers which are cell-type and development-specific. ENO1 interacts with PLG in the neuronal plasma membrane and promotes its activation. The C-terminal lysine is required for this binding. Interacts with ENO4 and PGAM2. Interacts with CMTM6. Mg(2+) is required as a cofactor. Post-translationally, ISGylated. Lysine 2-hydroxyisobutyrylation (Khib) by p300/EP300 activates the phosphopyruvate hydratase activity. In terms of tissue distribution, expressed in flagella of epididymal sperm. The alpha/alpha homodimer is expressed in embryo and in most adult tissues. The alpha/beta heterodimer and the beta/beta homodimer are found in striated muscle, and the alpha/gamma heterodimer and the gamma/gamma homodimer in neurons.

The protein localises to the cytoplasm. It is found in the cell membrane. The enzyme catalyses (2R)-2-phosphoglycerate = phosphoenolpyruvate + H2O. It functions in the pathway carbohydrate degradation; glycolysis; pyruvate from D-glyceraldehyde 3-phosphate: step 4/5. In terms of biological role, glycolytic enzyme that catalyzes the conversion of 2-phosphoglycerate to phosphoenolpyruvate. In addition to glycolysis, involved in various processes such as growth control, hypoxia tolerance and allergic responses. May also function in the intravascular and pericellular fibrinolytic system due to its ability to serve as a receptor and activator of plasminogen on the cell surface of several cell-types such as leukocytes and neurons. Stimulates immunoglobulin production. This chain is Alpha-enolase (Eno1), found in Rattus norvegicus (Rat).